Here is a 303-residue protein sequence, read N- to C-terminus: Protein SULFUR DEFICIENCY-INDUCED 2 (303 aa).

Residues Arg62–Ser89 are a coiled coil. TPR repeat units lie at residues Asp64 to Gln97, Glu100 to Gly133, Ser160 to Ala193, and Lys195 to Glu226. Residues Arg232–Ala253 are a coiled coil.

This sequence belongs to the MS5 protein family.

It is found in the nucleus. In terms of biological role, involved in the utilization of stored sulfate under sulfur-deficient conditions. The polypeptide is Protein SULFUR DEFICIENCY-INDUCED 2 (Arabidopsis thaliana (Mouse-ear cress)).